The following is a 59-amino-acid chain: Conorfamide-Vc1 (59 aa).

Residues 1 to 19 (MSGRGFLLLALLLLVTVEA) form the signal peptide. Residues 20–25 (TKVEKK) constitute a propeptide that is removed on maturation. Residues 32–39 (AWSGPRNR) form a positively charged region crucial for activity against MRGPRX1 receptors region. The residue at position 43 (phenylalanine 43) is a Phenylalanine amide. A propeptide spanning residues 45-59 (RRDMQSPLLSERLRL) is cleaved from the precursor.

It belongs to the FARP (FMRFamide related peptide) family. As to expression, expressed by the venom duct.

It localises to the secreted. Its function is as follows. This peptide activates human and mouse sensory neuron-specific G-protein coupled receptors MRGPRX1. The activity on human receptors has been measured (EC(50)=1.8 uM). Compared with the agonist chloroquine (anti-malaria drug), it is 200-fold more potent. The peptide also causes an increase in cytosolic calcium in a specific subset of DRG neurons, and, in contrast to other Conus venom peptides, the peptide also affects a large fraction of the non-neuronal cells. In vivo, when intracranially injected into mice, it principally renders mice unable to move, and at very low doses, it causes hyperactivity. It also induces itch sensation, since intradermal cheek injection into humanized transgenic mouse (mouse MRGPRX1 replaced by human MRGPRX1) induces scratching. In vivo, when tested at high doses (10 uM) on zebrafish larvae, it induces a range of behavioral effects ranging from an early hypoactivity during the first hour of treatment to an increase in movement during the following hours when the larvae are submitted to strobe light phases. The protein is Conorfamide-Vc1 of Conus victoriae (Queen Victoria cone).